Here is a 370-residue protein sequence, read N- to C-terminus: Phosphate-binding protein PstS 3 (370 aa).

The first 22 residues, 1–22 (MKLNRFGAAVGVLAAGALVLSA), serve as a signal peptide directing secretion. Cys-23 carries N-palmitoyl cysteine lipidation. Cys-23 carries S-diacylglycerol cysteine lipidation. Phosphate contacts are provided by residues 56-58 (STA), Ser-86, Asp-104, and 191-193 (SGT).

It belongs to the PstS family. The complex is composed of two ATP-binding proteins (PstB), two transmembrane proteins (PstC and PstA) and a solute-binding protein (PstS).

The protein resides in the cell membrane. In terms of biological role, part of the ABC transporter complex PstSACB involved in phosphate import. This chain is Phosphate-binding protein PstS 3 (pstS3), found in Mycobacterium bovis (strain ATCC BAA-935 / AF2122/97).